The sequence spans 297 residues: Nitrogenase iron protein (297 aa).

11-18 (GKGGIGKS) is a binding site for ATP. Position 99 (cysteine 99) interacts with [4Fe-4S] cluster. Residue arginine 102 is modified to ADP-ribosylarginine; by dinitrogenase reductase ADP-ribosyltransferase. A [4Fe-4S] cluster-binding site is contributed by cysteine 133.

Belongs to the NifH/BchL/ChlL family. Homodimer. Requires [4Fe-4S] cluster as cofactor. Post-translationally, the reversible ADP-ribosylation of Arg-102 inactivates the nitrogenase reductase and regulates nitrogenase activity.

The catalysed reaction is N2 + 8 reduced [2Fe-2S]-[ferredoxin] + 16 ATP + 16 H2O = H2 + 8 oxidized [2Fe-2S]-[ferredoxin] + 2 NH4(+) + 16 ADP + 16 phosphate + 6 H(+). Functionally, the key enzymatic reactions in nitrogen fixation are catalyzed by the nitrogenase complex, which has 2 components: the iron protein and the molybdenum-iron protein. The polypeptide is Nitrogenase iron protein (Mesorhizobium japonicum (strain LMG 29417 / CECT 9101 / MAFF 303099) (Mesorhizobium loti (strain MAFF 303099))).